Here is a 160-residue protein sequence, read N- to C-terminus: Large ribosomal subunit protein uL22c (160 aa).

Belongs to the universal ribosomal protein uL22 family. In terms of assembly, part of the 50S ribosomal subunit.

Its subcellular location is the plastid. It localises to the chloroplast. Functionally, this protein binds specifically to 23S rRNA. Its function is as follows. The globular domain of the protein is located near the polypeptide exit tunnel on the outside of the subunit, while an extended beta-hairpin is found that lines the wall of the exit tunnel in the center of the 70S ribosome. The sequence is that of Large ribosomal subunit protein uL22c (rpl22) from Arabis hirsuta (Hairy rock-cress).